Reading from the N-terminus, the 397-residue chain is Tryptophan synthase beta chain (397 aa).

Lysine 87 bears the N6-(pyridoxal phosphate)lysine mark.

Belongs to the TrpB family. Tetramer of two alpha and two beta chains. Pyridoxal 5'-phosphate is required as a cofactor.

The catalysed reaction is (1S,2R)-1-C-(indol-3-yl)glycerol 3-phosphate + L-serine = D-glyceraldehyde 3-phosphate + L-tryptophan + H2O. The protein operates within amino-acid biosynthesis; L-tryptophan biosynthesis; L-tryptophan from chorismate: step 5/5. Its function is as follows. The beta subunit is responsible for the synthesis of L-tryptophan from indole and L-serine. The polypeptide is Tryptophan synthase beta chain (Escherichia coli O17:K52:H18 (strain UMN026 / ExPEC)).